Here is a 218-residue protein sequence, read N- to C-terminus: Monomethylamine corrinoid protein 1 (218 aa).

The 91-residue stretch at M1–E91 folds into the B12-binding N-terminal domain. Residues T94–K218 enclose the B12-binding domain. H107 contributes to the methylcob(III)alamin binding site.

This sequence belongs to the methylamine corrinoid protein family. In terms of assembly, can form a complex with MtmB.

It functions in the pathway one-carbon metabolism; methanogenesis from methylamine. In terms of biological role, acts as a methyl group carrier between MtmB and MtbA. The polypeptide is Monomethylamine corrinoid protein 1 (mtmC1) (Methanosarcina mazei (strain ATCC BAA-159 / DSM 3647 / Goe1 / Go1 / JCM 11833 / OCM 88) (Methanosarcina frisia)).